The sequence spans 230 residues: Flagellar L-ring protein (230 aa).

Residues 1–15 form the signal peptide; the sequence is MSRLPSLSRLCLAIA. C16 carries the N-palmitoyl cysteine lipid modification. Residue C16 is the site of S-diacylglycerol cysteine attachment.

It belongs to the FlgH family. In terms of assembly, the basal body constitutes a major portion of the flagellar organelle and consists of four rings (L,P,S, and M) mounted on a central rod.

It is found in the cell outer membrane. The protein resides in the bacterial flagellum basal body. Its function is as follows. Assembles around the rod to form the L-ring and probably protects the motor/basal body from shearing forces during rotation. The polypeptide is Flagellar L-ring protein (Xanthomonas euvesicatoria pv. vesicatoria (strain 85-10) (Xanthomonas campestris pv. vesicatoria)).